The sequence spans 116 residues: Host cell factor C1 regulator 1 (116 aa).

Residues 1-22 (MILQQPLERGPPGRDPRATTGV) form a disordered region. The tract at residues 54–57 (DHPY) is interaction with HCFC1. The Nuclear export signal motif lies at 88–97 (IPEALRLLRL).

As to quaternary structure, interacts with HCFC1.

Its subcellular location is the cytoplasm. It localises to the nucleus. In terms of biological role, regulates HCFC1 activity by modulating its subcellular localization. Overexpression of HCFC1R1 leads to accumulation of HCFC1 in the cytoplasm. HCFC1R1-mediated export may provide the pool of cytoplasmic HCFC1 required for import of virion-derived VP16 into the nucleus. In Rattus norvegicus (Rat), this protein is Host cell factor C1 regulator 1 (Hcfc1r1).